A 263-amino-acid chain; its full sequence is Protein phosphatase type 2A regulatory subunit RTS3 (263 aa).

2 disordered regions span residues 1–62 (MIAT…AQRR) and 149–176 (LPLT…ISNG). Residues 46–61 (LSTSSSPSSSPMSAQR) show a composition bias toward low complexity. Phosphoserine occurs at positions 172, 192, 214, and 238.

The protein localises to the cytoplasm. It localises to the nucleus. Functionally, may be a component of a protein phosphatase type 2A (PP2A) complex. Negatively regulates SIT4 phosphatase, a modulators of caffeine sensitivity. In Saccharomyces cerevisiae (strain ATCC 204508 / S288c) (Baker's yeast), this protein is Protein phosphatase type 2A regulatory subunit RTS3 (RTS3).